We begin with the raw amino-acid sequence, 512 residues long: ATP synthase subunit alpha (512 aa).

169-176 (GDRQTGKT) serves as a coordination point for ATP.

Belongs to the ATPase alpha/beta chains family. F-type ATPases have 2 components, CF(1) - the catalytic core - and CF(0) - the membrane proton channel. CF(1) has five subunits: alpha(3), beta(3), gamma(1), delta(1), epsilon(1). CF(0) has three main subunits: a(1), b(2) and c(9-12). The alpha and beta chains form an alternating ring which encloses part of the gamma chain. CF(1) is attached to CF(0) by a central stalk formed by the gamma and epsilon chains, while a peripheral stalk is formed by the delta and b chains.

Its subcellular location is the cell membrane. The enzyme catalyses ATP + H2O + 4 H(+)(in) = ADP + phosphate + 5 H(+)(out). Produces ATP from ADP in the presence of a proton gradient across the membrane. The alpha chain is a regulatory subunit. The polypeptide is ATP synthase subunit alpha (Buchnera aphidicola subsp. Acyrthosiphon pisum (strain Tuc7)).